A 232-amino-acid polypeptide reads, in one-letter code: Flagellar L-ring protein (232 aa).

The N-terminal stretch at 1–21 (MQKNAAHTYAISSLLVLSLTG) is a signal peptide. A lipid anchor (N-palmitoyl cysteine) is attached at C22. C22 is lipidated: S-diacylglycerol cysteine.

The protein belongs to the FlgH family. In terms of assembly, the basal body constitutes a major portion of the flagellar organelle and consists of four rings (L,P,S, and M) mounted on a central rod.

The protein localises to the cell outer membrane. The protein resides in the bacterial flagellum basal body. Functionally, assembles around the rod to form the L-ring and probably protects the motor/basal body from shearing forces during rotation. The sequence is that of Flagellar L-ring protein from Escherichia coli O6:H1 (strain CFT073 / ATCC 700928 / UPEC).